A 193-amino-acid chain; its full sequence is Oligoribonuclease (193 aa).

One can recognise an Exonuclease domain in the interval 8–171 (LVWLDLEMTG…EDIRESVAEL (164 aa)). Tyr129 is an active-site residue.

This sequence belongs to the oligoribonuclease family.

The protein resides in the cytoplasm. Its function is as follows. 3'-to-5' exoribonuclease specific for small oligoribonucleotides. This is Oligoribonuclease from Alkalilimnicola ehrlichii (strain ATCC BAA-1101 / DSM 17681 / MLHE-1).